Here is a 340-residue protein sequence, read N- to C-terminus: Lipoyl synthase (340 aa).

Residues cysteine 83, cysteine 88, cysteine 94, cysteine 109, cysteine 113, cysteine 116, and serine 323 each contribute to the [4Fe-4S] cluster site. In terms of domain architecture, Radical SAM core spans 95–312 (FSGGTATFMI…AEEGYKMGFK (218 aa)).

The protein belongs to the radical SAM superfamily. Lipoyl synthase family. [4Fe-4S] cluster is required as a cofactor.

It localises to the cytoplasm. It carries out the reaction [[Fe-S] cluster scaffold protein carrying a second [4Fe-4S](2+) cluster] + N(6)-octanoyl-L-lysyl-[protein] + 2 oxidized [2Fe-2S]-[ferredoxin] + 2 S-adenosyl-L-methionine + 4 H(+) = [[Fe-S] cluster scaffold protein] + N(6)-[(R)-dihydrolipoyl]-L-lysyl-[protein] + 4 Fe(3+) + 2 hydrogen sulfide + 2 5'-deoxyadenosine + 2 L-methionine + 2 reduced [2Fe-2S]-[ferredoxin]. Its pathway is protein modification; protein lipoylation via endogenous pathway; protein N(6)-(lipoyl)lysine from octanoyl-[acyl-carrier-protein]: step 2/2. Catalyzes the radical-mediated insertion of two sulfur atoms into the C-6 and C-8 positions of the octanoyl moiety bound to the lipoyl domains of lipoate-dependent enzymes, thereby converting the octanoylated domains into lipoylated derivatives. This chain is Lipoyl synthase, found in Pseudomonas fluorescens (strain Pf0-1).